A 467-amino-acid polypeptide reads, in one-letter code: Glutamate--tRNA ligase (467 aa).

Positions proline 9–glycine 19 match the 'HIGH' region motif. Positions lysine 237–arginine 241 match the 'KMSKS' region motif. ATP is bound at residue lysine 240.

It belongs to the class-I aminoacyl-tRNA synthetase family. Glutamate--tRNA ligase type 1 subfamily. As to quaternary structure, monomer.

Its subcellular location is the cytoplasm. The catalysed reaction is tRNA(Glu) + L-glutamate + ATP = L-glutamyl-tRNA(Glu) + AMP + diphosphate. In terms of biological role, catalyzes the attachment of glutamate to tRNA(Glu) in a two-step reaction: glutamate is first activated by ATP to form Glu-AMP and then transferred to the acceptor end of tRNA(Glu). The protein is Glutamate--tRNA ligase of Xanthomonas axonopodis pv. citri (strain 306).